Consider the following 881-residue polypeptide: Glutamate--tRNA ligase (881 aa).

The interval 1-480 (MSVRVRLAPS…ILRFKKSIGQ (480 aa)) is glutamyl-tRNA synthetase. The 'HIGH' region signature appears at 9-19 (PSPTGNLHIGT). The 'KMSKS' region motif lies at 248 to 252 (KLSKR). Lysine 251 is a binding site for ATP. Positions 481–881 (EIEDTKIEDT…IKREIFGKPS (401 aa)) are unknown. Residues 488-502 (EDTKKAETTPHKSKG) are compositionally biased toward basic and acidic residues. Positions 488–747 (EDTKKAETTP…PTATDAETRE (260 aa)) are disordered. Over residues 522–548 (QTQTTKPPKKGQTATPVATTPTATDVT) the composition is skewed to low complexity. Residues 549–562 (ENTSVGTQETQSQI) are compositionally biased toward polar residues. Residues 563–576 (TTPVATTPTATDVT) are compositionally biased toward low complexity. A compositionally biased stretch (polar residues) spans 577 to 590 (ENTSVGTQETQSQI). Over residues 591–604 (TTPVATTPTATDVT) the composition is skewed to low complexity. The span at 605 to 618 (ENTSVETQETQSQI) shows a compositional bias: polar residues. The span at 619–632 (TTPVATTPTATDVT) shows a compositional bias: low complexity. The segment covering 633–646 (ENTSVETQETQSQI) has biased composition (polar residues). The segment covering 647-660 (TTPVATTPTATDVT) has biased composition (low complexity). A compositionally biased stretch (polar residues) spans 661–674 (ENTSVGTQETQSQI). Positions 675–688 (TTPVATTPTATDVT) are enriched in low complexity. Residues 689–702 (ENTSVETQETQSQI) are compositionally biased toward polar residues. Residues 703-720 (TTPVATTSTATDVTENTS) show a composition bias toward low complexity. A compositionally biased stretch (polar residues) spans 721–730 (VETQETQSQI). Residues 731–742 (TTPVATTPTATD) are compositionally biased toward low complexity. 2 helical membrane-spanning segments follow: residues 809 to 829 (LFGW…VIEA) and 832 to 852 (GIPI…VWFV).

It belongs to the class-I aminoacyl-tRNA synthetase family. Glutamate--tRNA ligase type 1 subfamily. In terms of assembly, monomer.

It is found in the cytoplasm. Its subcellular location is the cell membrane. The catalysed reaction is tRNA(Glu) + L-glutamate + ATP = L-glutamyl-tRNA(Glu) + AMP + diphosphate. Functionally, catalyzes the attachment of glutamate to tRNA(Glu) in a two-step reaction: glutamate is first activated by ATP to form Glu-AMP and then transferred to the acceptor end of tRNA(Glu). The sequence is that of Glutamate--tRNA ligase (gltX) from Trichodesmium erythraeum (strain IMS101).